The chain runs to 108 residues: Tubulin-specific chaperone A (108 aa).

A2 is modified (N-acetylalanine).

The protein belongs to the TBCA family. As to quaternary structure, supercomplex made of cofactors A to E. Cofactors A and D function by capturing and stabilizing tubulin in a quasi-native conformation. Cofactor E binds to the cofactor D-tubulin complex; interaction with cofactor C then causes the release of tubulin polypeptides that are committed to the native state.

It localises to the cytoplasm. The protein localises to the cytoskeleton. Its function is as follows. Tubulin-folding protein; involved in the early step of the tubulin folding pathway. This chain is Tubulin-specific chaperone A (TBCA), found in Homo sapiens (Human).